The chain runs to 517 residues: UPF0522 protein B (517 aa).

Positions 1–19 (MNKTIILLLISIIFEIVIS) are cleaved as a signal peptide. Residues asparagine 148, asparagine 245, asparagine 333, asparagine 345, asparagine 370, asparagine 423, asparagine 432, and asparagine 495 are each glycosylated (N-linked (GlcNAc...) asparagine).

The protein belongs to the UPF0522 family.

The protein resides in the secreted. The polypeptide is UPF0522 protein B (Dictyostelium discoideum (Social amoeba)).